The chain runs to 464 residues: MKSTVEQLSPTRVRINVEVPFEELKPDFDKAYKALAQQIRLPGFRPGKAPAKLLEARVGRGAVLEQVVNDALPSRYSEAVTSASVKAIGQPEIEITKIEDGELLEFTAEVDVRPEITLPDYSELSVTVDPIEITDEAVEEQLLSLRQRFGTLTGVERAVEDGDFISIDLSATVDGEAVPEATASGLSHEVGSGQLIEGLDEAVVGVKAGESKEFTSTLVAGDHAGKEAVVTVTVGTVKERELPAEDDEFAQLASEFDTLDELKADLRERVGRVRKVEQAGQIRDKVLETLLETVEVPLPEAVVKAEVDAALHDAVHGLDHDEDALNKLLEEQGTSREEFDKDAKDSAERSVKTQLLLDAIADASDVTVGQDELTERILFQAQRYGMAPEQFIQQIQQAGQLGAVFADVRRGKALAGVVEQATVTDTSGASVDTAELFGNGEADTEEAASTDEVASDSAEGEDQK.

One can recognise a PPIase FKBP-type domain in the interval G162–P243. The tract at residues G428 to K464 is disordered.

The protein belongs to the FKBP-type PPIase family. Tig subfamily.

Its subcellular location is the cytoplasm. It carries out the reaction [protein]-peptidylproline (omega=180) = [protein]-peptidylproline (omega=0). In terms of biological role, involved in protein export. Acts as a chaperone by maintaining the newly synthesized protein in an open conformation. Functions as a peptidyl-prolyl cis-trans isomerase. This chain is Trigger factor, found in Rhodococcus opacus (strain B4).